Reading from the N-terminus, the 330-residue chain is Ketol-acid reductoisomerase (NADP(+)) (330 aa).

The KARI N-terminal Rossmann domain maps to 3 to 184 (LPVYYDKDID…GGGRMGVLET (182 aa)). Residues 26-29 (YGAQ), serine 52, and serine 54 contribute to the NADP(+) site. The active site involves histidine 109. Glycine 135 contributes to the NADP(+) binding site. The region spanning 185-329 (SFKEECESDL…EILRAPFNHK (145 aa)) is the KARI C-terminal knotted domain. Mg(2+) is bound by residues aspartate 193, glutamate 197, glutamate 229, and glutamate 233. Residue serine 254 coordinates substrate.

It belongs to the ketol-acid reductoisomerase family. The cofactor is Mg(2+).

The catalysed reaction is (2R)-2,3-dihydroxy-3-methylbutanoate + NADP(+) = (2S)-2-acetolactate + NADPH + H(+). The enzyme catalyses (2R,3R)-2,3-dihydroxy-3-methylpentanoate + NADP(+) = (S)-2-ethyl-2-hydroxy-3-oxobutanoate + NADPH + H(+). It functions in the pathway amino-acid biosynthesis; L-isoleucine biosynthesis; L-isoleucine from 2-oxobutanoate: step 2/4. It participates in amino-acid biosynthesis; L-valine biosynthesis; L-valine from pyruvate: step 2/4. Involved in the biosynthesis of branched-chain amino acids (BCAA). Catalyzes an alkyl-migration followed by a ketol-acid reduction of (S)-2-acetolactate (S2AL) to yield (R)-2,3-dihydroxy-isovalerate. In the isomerase reaction, S2AL is rearranged via a Mg-dependent methyl migration to produce 3-hydroxy-3-methyl-2-ketobutyrate (HMKB). In the reductase reaction, this 2-ketoacid undergoes a metal-dependent reduction by NADPH to yield (R)-2,3-dihydroxy-isovalerate. This chain is Ketol-acid reductoisomerase (NADP(+)), found in Helicobacter pylori (strain ATCC 700392 / 26695) (Campylobacter pylori).